Here is a 392-residue protein sequence, read N- to C-terminus: Chorismate synthase (392 aa).

2 residues coordinate NADP(+): R40 and R46. FMN contacts are provided by residues 129–131 (RSS), 257–258 (QA), G302, 317–321 (KPIAT), and R343.

It belongs to the chorismate synthase family. As to quaternary structure, homotetramer. FMNH2 is required as a cofactor.

The enzyme catalyses 5-O-(1-carboxyvinyl)-3-phosphoshikimate = chorismate + phosphate. It functions in the pathway metabolic intermediate biosynthesis; chorismate biosynthesis; chorismate from D-erythrose 4-phosphate and phosphoenolpyruvate: step 7/7. Its function is as follows. Catalyzes the anti-1,4-elimination of the C-3 phosphate and the C-6 proR hydrogen from 5-enolpyruvylshikimate-3-phosphate (EPSP) to yield chorismate, which is the branch point compound that serves as the starting substrate for the three terminal pathways of aromatic amino acid biosynthesis. This reaction introduces a second double bond into the aromatic ring system. The sequence is that of Chorismate synthase from Chloroherpeton thalassium (strain ATCC 35110 / GB-78).